A 101-amino-acid polypeptide reads, in one-letter code: Citrinin resistance protein, mitochondrial (101 aa).

The protein resides in the mitochondrion. Mitochondrial protein that is involved in citrinin resistance. The sequence is that of Citrinin resistance protein, mitochondrial from Saccharomyces cerevisiae (strain ATCC 204508 / S288c) (Baker's yeast).